The sequence spans 90 residues: DNA-binding protein HU-alpha (90 aa).

The protein belongs to the bacterial histone-like protein family. Heterodimer of an alpha and a beta chain.

In terms of biological role, histone-like DNA-binding protein which is capable of wrapping DNA to stabilize it, and thus to prevent its denaturation under extreme environmental conditions. This is DNA-binding protein HU-alpha (hupA) from Aeromonas hydrophila.